The following is a 248-amino-acid chain: Clathrin light chain A (248 aa).

Residues 1 to 92 (MAELDPFGAP…YYQESNGPTD (92 aa)) are disordered. The span at 13-25 (APGGPALGNGVAG) shows a compositional bias: gly residues. The span at 61–71 (GPQPHGEPPGG) shows a compositional bias: pro residues. Residues 100 to 162 (VDRLQSEPES…QLQKTKANNR (63 aa)) are involved in binding clathrin heavy chain. Ser105 and Ser206 each carry phosphoserine. Lys223 is modified (N6-acetyllysine). Position 236 is a phosphoserine (Ser236). Position 242 is an N6-acetyllysine (Lys242).

This sequence belongs to the clathrin light chain family. In terms of assembly, clathrin coats are formed from molecules containing 3 heavy chains and 3 light chains. Interacts with CALY; the interaction stimulates clathrin self-assembly and clathrin-mediated endocytosis. Interacts with CKAP5 and TACC3 forming the TACC3/ch-TOG/clathrin complex located at spindle inter-microtubules bridges; the complex implicates clathrin triskelions.

It is found in the cytoplasmic vesicle membrane. Its subcellular location is the membrane. It localises to the coated pit. The protein resides in the cytoplasm. The protein localises to the cytoskeleton. It is found in the spindle. Clathrin is the major protein of the polyhedral coat of coated pits and vesicles. Acts as a component of the TACC3/ch-TOG/clathrin complex proposed to contribute to stabilization of kinetochore fibers of the mitotic spindle by acting as inter-microtubule bridge. In Homo sapiens (Human), this protein is Clathrin light chain A (CLTA).